The sequence spans 165 residues: MIIEGPVIKFGDKIDTDIIIPARYLKYTDPQYLAQHVMEPLDPEFYKKASKGVIIVAGKVFGMGSSREQAAIALKAAGVKAVVAESFARIFYRNAINNGLPVITLPNSTKEIDENSYVKIDVETGEILVGNKVLKGKGITGMALEILQAGGIMEYLKKMQTVNRN.

The protein belongs to the LeuD family. LeuD type 2 subfamily. As to quaternary structure, heterodimer of LeuC and LeuD.

The catalysed reaction is (2R,3S)-3-isopropylmalate = (2S)-2-isopropylmalate. The protein operates within amino-acid biosynthesis; L-leucine biosynthesis; L-leucine from 3-methyl-2-oxobutanoate: step 2/4. In terms of biological role, catalyzes the isomerization between 2-isopropylmalate and 3-isopropylmalate, via the formation of 2-isopropylmaleate. The sequence is that of 3-isopropylmalate dehydratase small subunit from Saccharolobus islandicus (strain Y.G.57.14 / Yellowstone #1) (Sulfolobus islandicus).